The primary structure comprises 2275 residues: Serine-rich adhesin for platelets (2275 aa).

An N-terminal signal peptide occupies residues methionine 1–phenylalanine 89. The segment at alanine 90–alanine 230 is serine-rich repeat region 1, SRR1. Over residues leucine 100 to asparagine 111 the composition is skewed to polar residues. Disordered stretches follow at residues leucine 100 to threonine 229 and asparagine 751 to glycine 2247. The segment covering serine 112 to threonine 128 has biased composition (low complexity). Positions lysine 129–aspartate 140 are enriched in polar residues. The span at valine 150–threonine 229 shows a compositional bias: low complexity. The interval proline 231–asparagine 751 is non-repeat region (NRR). 2 stretches are compositionally biased toward low complexity: residues serine 752–serine 1392 and serine 1402–glutamate 2218. A serine-rich repeat region 2, SRR2 region spans residues serine 752–threonine 2236. Positions leucine 2233–glycine 2237 match the LPXTG sorting signal motif. Position 2236 is a pentaglycyl murein peptidoglycan amidated threonine (threonine 2236). Positions glycine 2237–alanine 2275 are cleaved as a propeptide — removed by sortase.

This sequence belongs to the serine-rich repeat protein (SRRP) family. In terms of processing, proteolytically cleaved by a metalloprotease. Post-translationally, glycosylated. It is probable that most of the Ser residues in SSR1 and SSR2 are O-GlcNAcylated. Sequential glycosylation by sugar transferases are able to generate complex sugar polymorphisms.

It localises to the secreted. The protein localises to the cell wall. Its function is as follows. Mediates binding to human platelets, possibly through a receptor-ligand interaction. Probably associated with virulence in endovascular infection. The sequence is that of Serine-rich adhesin for platelets (sraP) from Staphylococcus aureus (strain MSSA476).